Here is a 245-residue protein sequence, read N- to C-terminus: Tyrosine recombinase XerD-like (245 aa).

The 72-residue stretch at 1–72 (MITFISKFLA…AVNQFLFFLY (72 aa)) folds into the Core-binding (CB) domain. The 156-residue stretch at 90–245 (PLLTPAYQEV…PVTLEKYFKN (156 aa)) folds into the Tyr recombinase domain. Active-site residues include Lys151 and Arg210. The active-site O-(3'-phospho-DNA)-tyrosine intermediate is the Tyr242.

The protein belongs to the 'phage' integrase family. XerD-like subfamily.

The protein localises to the cytoplasm. In terms of biological role, putative tyrosine recombinase. Not involved in the cutting and rejoining of the recombining DNA molecules on dif(SL) site. This chain is Tyrosine recombinase XerD-like, found in Streptococcus mutans serotype c (strain ATCC 700610 / UA159).